The chain runs to 96 residues: uncharacterized protein (96 aa).

Residues Cys-10, Cys-16, and Cys-55 each coordinate [3Fe-4S] cluster. The segment at 67–96 (AGDGERASADPAPSPAEAERHAAKDQHNLG) is disordered. A compositionally biased stretch (basic and acidic residues) spans 83–96 (EAERHAAKDQHNLG).

Requires [3Fe-4S] cluster as cofactor.

Functionally, electron transport protein for the cytochrome systems. This is an uncharacterized protein from Bradyrhizobium diazoefficiens (strain JCM 10833 / BCRC 13528 / IAM 13628 / NBRC 14792 / USDA 110).